A 438-amino-acid chain; its full sequence is CBL-interacting protein kinase 32 (438 aa).

A Protein kinase domain is found at 13–268; the sequence is YELGRTIGEG…IPEILEDEWF (256 aa). Residues 19–27 and lysine 42 contribute to the ATP site; that span reads IGEGTFAKV. Aspartate 136 functions as the Proton acceptor in the catalytic mechanism. The segment at 154–183 is activation loop; it reads DFGLSALSQQIKDDGLLHTTCGTPNYVAPE. Residues 305–329 form the NAF domain; it reads EEPEALNAFELISMSAGLNLGNLFD. The PPI stretch occupies residues 335–364; sequence KRETRFTSKCPPKEIVRKIEEAAKPLGFDV.

It belongs to the protein kinase superfamily. CAMK Ser/Thr protein kinase family. SNF1 subfamily. Mn(2+) is required as a cofactor.

It catalyses the reaction L-seryl-[protein] + ATP = O-phospho-L-seryl-[protein] + ADP + H(+). The enzyme catalyses L-threonyl-[protein] + ATP = O-phospho-L-threonyl-[protein] + ADP + H(+). CIPK serine-threonine protein kinases interact with CBL proteins. Binding of a CBL protein to the regulatory NAF domain of CIPK protein lead to the activation of the kinase in a calcium-dependent manner. The polypeptide is CBL-interacting protein kinase 32 (CIPK32) (Oryza sativa subsp. japonica (Rice)).